The following is a 263-amino-acid chain: Purine nucleoside phosphorylase SAS1121 (263 aa).

His-79, Cys-124, and His-141 together coordinate Zn(2+).

It belongs to the purine nucleoside phosphorylase YfiH/LACC1 family. In terms of assembly, homodimer. Cu(2+) is required as a cofactor. Zn(2+) serves as cofactor.

The catalysed reaction is adenosine + phosphate = alpha-D-ribose 1-phosphate + adenine. It catalyses the reaction S-methyl-5'-thioadenosine + phosphate = 5-(methylsulfanyl)-alpha-D-ribose 1-phosphate + adenine. The enzyme catalyses inosine + phosphate = alpha-D-ribose 1-phosphate + hypoxanthine. It carries out the reaction adenosine + H2O + H(+) = inosine + NH4(+). Purine nucleoside enzyme that catalyzes the phosphorolysis of adenosine and inosine nucleosides, yielding D-ribose 1-phosphate and the respective free bases, adenine and hypoxanthine. Also catalyzes the phosphorolysis of S-methyl-5'-thioadenosine into adenine and S-methyl-5-thio-alpha-D-ribose 1-phosphate. Also has adenosine deaminase activity. This Staphylococcus aureus (strain MSSA476) protein is Purine nucleoside phosphorylase SAS1121.